Consider the following 198-residue polypeptide: 3-isopropylmalate dehydratase small subunit (198 aa).

The protein belongs to the LeuD family. LeuD type 1 subfamily. Heterodimer of LeuC and LeuD.

The catalysed reaction is (2R,3S)-3-isopropylmalate = (2S)-2-isopropylmalate. The protein operates within amino-acid biosynthesis; L-leucine biosynthesis; L-leucine from 3-methyl-2-oxobutanoate: step 2/4. Its function is as follows. Catalyzes the isomerization between 2-isopropylmalate and 3-isopropylmalate, via the formation of 2-isopropylmaleate. The protein is 3-isopropylmalate dehydratase small subunit of Mycobacterium marinum (strain ATCC BAA-535 / M).